A 312-amino-acid polypeptide reads, in one-letter code: Malate dehydrogenase (312 aa).

Residues 7 to 13 (GAAGGIG) and Asp34 contribute to the NAD(+) site. Positions 81 and 87 each coordinate substrate. NAD(+) contacts are provided by residues Asn94 and 117–119 (ITN). Residues Asn119 and Arg153 each coordinate substrate. The active-site Proton acceptor is His177. Residue Met227 participates in NAD(+) binding.

Belongs to the LDH/MDH superfamily. MDH type 1 family. Homodimer.

The catalysed reaction is (S)-malate + NAD(+) = oxaloacetate + NADH + H(+). Functionally, catalyzes the reversible oxidation of malate to oxaloacetate. In Salmonella newport (strain SL254), this protein is Malate dehydrogenase.